The chain runs to 450 residues: UDP-N-acetylmuramoylalanine--D-glutamate ligase (450 aa).

119–125 (GSNGKTT) serves as a coordination point for ATP.

It belongs to the MurCDEF family.

It is found in the cytoplasm. It catalyses the reaction UDP-N-acetyl-alpha-D-muramoyl-L-alanine + D-glutamate + ATP = UDP-N-acetyl-alpha-D-muramoyl-L-alanyl-D-glutamate + ADP + phosphate + H(+). The protein operates within cell wall biogenesis; peptidoglycan biosynthesis. In terms of biological role, cell wall formation. Catalyzes the addition of glutamate to the nucleotide precursor UDP-N-acetylmuramoyl-L-alanine (UMA). The chain is UDP-N-acetylmuramoylalanine--D-glutamate ligase from Bacillus anthracis (strain A0248).